Here is a 3718-residue protein sequence, read N- to C-terminus: Laminin subunit alpha-5 (3718 aa).

An N-terminal signal peptide occupies residues 1–40 (MAKRGGQLCAGSAPGALGPRSPAPRPLLLLLAGLALVGEA). A Laminin N-terminal domain is found at 46–304 (DGFSLHPPYF…SIKDISIGGR (259 aa)). N-linked (GlcNAc...) asparagine glycosylation is found at Asn-100, Asn-148, and Asn-248. Disulfide bonds link Cys-305-Cys-314, Cys-307-Cys-327, Cys-329-Cys-338, Cys-341-Cys-361, Cys-364-Cys-373, Cys-366-Cys-398, Cys-401-Cys-410, Cys-413-Cys-431, Cys-434-Cys-445, Cys-436-Cys-452, Cys-454-Cys-463, and Cys-466-Cys-476. 3 Laminin EGF-like domains span residues 305–363 (CVCH…ECQS), 364–433 (CNCH…VCRP), and 434–479 (CDCE…CYPL). Asn-383 carries N-linked (GlcNAc...) asparagine glycosylation. Asn-457 carries N-linked (GlcNAc...) asparagine glycosylation. Residue Asn-485 is glycosylated (N-linked (GlcNAc...) asparagine). 29 disulfides stabilise this stretch: Cys-500-Cys-512, Cys-502-Cys-521, Cys-523-Cys-532, Cys-535-Cys-544, Cys-547-Cys-559, Cys-549-Cys-566, Cys-568-Cys-577, Cys-580-Cys-590, Cys-593-Cys-605, Cys-595-Cys-611, Cys-613-Cys-622, Cys-625-Cys-635, Cys-638-Cys-650, Cys-640-Cys-656, Cys-658-Cys-667, Cys-670-Cys-680, Cys-683-Cys-695, Cys-685-Cys-702, Cys-704-Cys-713, Cys-716-Cys-731, Cys-752-Cys-761, Cys-764-Cys-779, Cys-782-Cys-796, Cys-784-Cys-802, Cys-804-Cys-813, Cys-816-Cys-831, Cys-834-Cys-846, Cys-836-Cys-853, and Cys-855-Cys-864. 7 Laminin EGF-like domains span residues 500–546 (CDCN…SCHP), 547–592 (CQCS…LCQL), 593–637 (CGCS…DCHA), 638–682 (CACD…SCIP), 683–728 (CHCS…YCEA), 729–781 (GSCH…GCTR), and 782–833 (CSCD…GCRS). In terms of domain architecture, Laminin EGF-like 11; truncated spans 834–855 (CRCDVGGALGQGCEPKTGACRC). The domain IV 1 (domain IV B) stretch occupies residues 856–1442 (RPNTQGPTCS…SLFYNNGALP (587 aa)). Asn-905, Asn-926, and Asn-964 each carry an N-linked (GlcNAc...) asparagine glycan. Residues 1253–1284 (LTQSQELSPGAPPEGPQPRPPTAVDPNAEPTL) are disordered. Over residues 1262–1275 (GAPPEGPQPRPPTA) the composition is skewed to pro residues. The N-linked (GlcNAc...) asparagine glycan is linked to Asn-1335. 16 disulfide bridges follow: Cys-1443–Cys-1455, Cys-1445–Cys-1462, Cys-1464–Cys-1473, Cys-1476–Cys-1486, Cys-1489–Cys-1496, Cys-1491–Cys-1503, Cys-1505–Cys-1514, Cys-1517–Cys-1530, Cys-1533–Cys-1548, Cys-1535–Cys-1555, Cys-1557–Cys-1566, Cys-1569–Cys-1579, Cys-1582–Cys-1594, Cys-1584–Cys-1601, Cys-1603–Cys-1612, and Cys-1615–Cys-1630. Laminin EGF-like domains follow at residues 1443-1488 (CGCH…NCRP), 1489-1532 (CDCG…GCEE), 1533-1581 (CNCS…SCRP), and 1582-1632 (CDCH…GCTR). Asn-1534 carries N-linked (GlcNAc...) asparagine glycosylation. The Laminin EGF-like 16; first part domain occupies 1633-1642 (CFCFGATERC). The region spanning 1646 to 1831 (NLARHEFVDM…RGPPASNVEL (186 aa)) is the Laminin IV type A domain. 2 consecutive short sequence motifs (cell attachment site) follow at residues 1723–1725 (RGD) and 1839–1841 (RGD). The Laminin EGF-like 16; second part domain occupies 1832 to 1864 (CMCPANYRGDSCQECAPGYYRDTKGLFLGRCVP). Disulfide bonds link Cys-1865/Cys-1874, Cys-1867/Cys-1881, Cys-1884/Cys-1893, Cys-1896/Cys-1912, Cys-1915/Cys-1930, Cys-1917/Cys-1939, Cys-1941/Cys-1950, Cys-1953/Cys-1968, Cys-1971/Cys-1986, Cys-1973/Cys-1993, Cys-1996/Cys-2005, Cys-2008/Cys-2022, Cys-2025/Cys-2035, Cys-2027/Cys-2042, Cys-2044/Cys-2053, Cys-2056/Cys-2069, Cys-2072/Cys-2083, Cys-2074/Cys-2090, Cys-2092/Cys-2101, Cys-2104/Cys-2116, Cys-2119/Cys-2126, Cys-2121/Cys-2133, Cys-2135/Cys-2144, and Cys-2147/Cys-2166. Laminin EGF-like domains are found at residues 1865 to 1914 (CQCH…PCVS), 1915 to 1970 (CPCP…SCQP), 1971 to 2024 (CDCS…NCTR), 2025 to 2071 (CDCS…GCRP), 2072 to 2118 (CACG…GCRR), and 2119 to 2168 (CQCP…HCEV). The N-linked (GlcNAc...) asparagine glycan is linked to Asn-2021. The segment at 2169-2735 (CDHCVVLLLD…AQARSAASKV (567 aa)) is domain II and I. Residues Asn-2198, Asn-2211, Asn-2365, Asn-2395, Asn-2425, Asn-2503, and Asn-2570 are each glycosylated (N-linked (GlcNAc...) asparagine). Coiled-coil stretches lie at residues 2205-2257 (ARLH…SQAT) and 2330-2464 (TRDL…ASLD). Coiled coils occupy residues 2604 to 2621 (ARKN…AMLA) and 2639 to 2705 (AEAL…LENR). Asn-2709 carries N-linked (GlcNAc...) asparagine glycosylation. Laminin G-like domains follow at residues 2736 to 2933 (KVSM…DKPC), 2947 to 3119 (GSYL…SFGC), 3128 to 3296 (TMTF…SVGC), 3337 to 3511 (AYQF…VTPC), and 3518 to 3689 (DGLF…MRGC). 2 disulfides stabilise this stretch: Cys-2903–Cys-2933 and Cys-3094–Cys-3119. Residues Asn-3111, Asn-3213, Asn-3261, and Asn-3291 are each glycosylated (N-linked (GlcNAc...) asparagine). Disulfide bonds link Cys-3265/Cys-3296 and Cys-3488/Cys-3511. N-linked (GlcNAc...) asparagine glycans are attached at residues Asn-3623 and Asn-3673. A disulfide bridge connects residues Cys-3661 and Cys-3689.

Laminin is a complex glycoprotein, consisting of three different polypeptide chains (alpha, beta, gamma), which are bound to each other by disulfide bonds into a cross-shaped molecule comprising one long and three short arms with globules at each end. Alpha-5 is a subunit of laminin-10 (laminin-511), laminin-11 (laminin-521) and laminin-15 (laminin-523). In terms of tissue distribution, in adult, high levels in heart, lung, and kidney; lower in brain, muscle and testis; very low in liver, gut and skin.

The protein localises to the secreted. Its subcellular location is the extracellular space. It localises to the extracellular matrix. It is found in the basement membrane. Functionally, binding to cells via a high affinity receptor, laminin is thought to mediate the attachment, migration and organization of cells into tissues during embryonic development by interacting with other extracellular matrix components. Alpha-5 may be the major laminin alpha chain of adult epithelial and/or endothelial basal laminae. Plays a role in the regulation of skeletogenesis, through a mechanism that involves integrin-mediated signaling and PTK2B/PYK2. This is Laminin subunit alpha-5 (Lama5) from Mus musculus (Mouse).